A 349-amino-acid polypeptide reads, in one-letter code: Green-sensitive opsin-1 (349 aa).

The Extracellular segment spans residues 1–36; that stretch reads MNGTEGSNFYIPMSNRTGLVRSPYDYTQYYLAEPWK. Asn2 and Asn15 each carry an N-linked (GlcNAc...) asparagine glycan. Residues 37–61 form a helical membrane-spanning segment; sequence FKALAFYMFLLIIFGFPINVLTLVV. At 62–73 the chain is on the cytoplasmic side; it reads TAQHKKLRQPLN. Residues 74–99 traverse the membrane as a helical segment; sequence YILVNLAFAGTIMVIFGFTVSFYCSL. Topologically, residues 100–113 are extracellular; that stretch reads VGYMALGPLGCVME. A disulfide bond links Cys110 and Cys187. A helical transmembrane segment spans residues 114 to 133; sequence GFFATLGGQVALWSLVVLAI. Residues 134 to 152 are Cytoplasmic-facing; the sequence is ERYIVVCKPMGSFKFSANH. A helical transmembrane segment spans residues 153–176; sequence AMAGIAFTWFMACSCAVPPLFGWS. The Extracellular segment spans residues 177–202; it reads RYLPEGMQTSCGPDYYTLNPEYNNES. An N-linked (GlcNAc...) asparagine glycan is attached at Asn200. The chain crosses the membrane as a helical span at residues 203 to 230; the sequence is YVMYMFSCHFCIPVTTIFFTYGSLVCTV. The Cytoplasmic segment spans residues 231-252; that stretch reads KAAAAQQQESESTQKAEREVTR. The helical transmembrane segment at 253 to 276 threads the bilayer; that stretch reads MVILMVLGFLFAWVPYASFAAWIF. Topologically, residues 277–284 are extracellular; the sequence is FNRGAAFS. Residues 285-309 traverse the membrane as a helical segment; that stretch reads AQAMAVPAFFSKTSAVFNPIIYVLL. Lys296 is subject to N6-(retinylidene)lysine. The Cytoplasmic portion of the chain corresponds to 310–349; sequence NKQFRSCMLNTLFCGKSPLGDDESSSVSTSKTEVSSVSPA. Positions 328–349 are disordered; that stretch reads LGDDESSSVSTSKTEVSSVSPA. Over residues 334–349 the composition is skewed to low complexity; sequence SSVSTSKTEVSSVSPA.

This sequence belongs to the G-protein coupled receptor 1 family. Opsin subfamily. In terms of processing, phosphorylated on some or all of the serine and threonine residues present in the C-terminal region. Retinal double cone accessory photoreceptor cell outer segments.

Its subcellular location is the membrane. Visual pigments are the light-absorbing molecules that mediate vision. They consist of an apoprotein, opsin, covalently linked to cis-retinal. The protein is Green-sensitive opsin-1 (opn1mw1) of Danio rerio (Zebrafish).